Here is a 159-residue protein sequence, read N- to C-terminus: U1 small nuclear ribonucleoprotein C (159 aa).

The segment at 4 to 36 (FYCDYCDTYLTHDSPSVRKTHCSGRKHKENVKD) adopts a Matrin-type zinc-finger fold. Tyr8 carries the phosphotyrosine modification. Ser17 carries the phosphoserine modification. The residue at position 52 (Lys52) is an N6-acetyllysine. The segment at 62–96 (IPPAPFSAPPPAGAMIPPPPSLPGPPRPGMMPAPH) is disordered. Residues 63 to 92 (PPAPFSAPPPAGAMIPPPPSLPGPPRPGMM) are compositionally biased toward pro residues.

It belongs to the U1 small nuclear ribonucleoprotein C family. Component of the U1 snRNP. The U1 snRNP is composed of the U1 snRNA and the 7 core Sm proteins SNRPB, SNRPD1, SNRPD2, SNRPD3, SNRPE, SNRPF and SNRPG that assemble in a heptameric protein ring on the Sm site of the small nuclear RNA to form the core snRNP, and at least 3 U1 snRNP-specific proteins SNRNP70/U1-70K, SNRPA/U1-A and SNRPC/U1-C. SNRPC/U1-C interacts with U1 snRNA and the 5' splice-site region of the pre-mRNA. Interacts (via N-terminus) with TIA1 (via C-terminus); thereby promoting spliceosomal U1 snRNP recruitment to 5' splice sites.

The protein localises to the nucleus. In terms of biological role, component of the spliceosomal U1 snRNP, which is essential for recognition of the pre-mRNA 5' splice-site and the subsequent assembly of the spliceosome. SNRPC/U1-C is directly involved in initial 5' splice-site recognition for both constitutive and regulated alternative splicing. The interaction with the 5' splice-site seems to precede base-pairing between the pre-mRNA and the U1 snRNA. Stimulates commitment or early (E) complex formation by stabilizing the base pairing of the 5' end of the U1 snRNA and the 5' splice-site region. The protein is U1 small nuclear ribonucleoprotein C of Rattus norvegicus (Rat).